A 236-amino-acid chain; its full sequence is Purine nucleoside phosphorylase DeoD-type (236 aa).

Position 5 (histidine 5) interacts with a purine D-ribonucleoside. Phosphate is bound by residues glycine 21, arginine 25, arginine 44, and 88–91; that span reads RIGS. Residues 180–182 and 204–205 each bind a purine D-ribonucleoside; these read EME and SD. Catalysis depends on aspartate 205, which acts as the Proton donor.

The protein belongs to the PNP/UDP phosphorylase family. Homohexamer; trimer of homodimers.

The catalysed reaction is a purine D-ribonucleoside + phosphate = a purine nucleobase + alpha-D-ribose 1-phosphate. It catalyses the reaction a purine 2'-deoxy-D-ribonucleoside + phosphate = a purine nucleobase + 2-deoxy-alpha-D-ribose 1-phosphate. In terms of biological role, catalyzes the reversible phosphorolytic breakdown of the N-glycosidic bond in the beta-(deoxy)ribonucleoside molecules, with the formation of the corresponding free purine bases and pentose-1-phosphate. This Hahella chejuensis (strain KCTC 2396) protein is Purine nucleoside phosphorylase DeoD-type.